The chain runs to 394 residues: Flavin-dependent monooxygenase, oxygenase subunit HsaA (394 aa).

Residues Trp-84, 118 to 120 (SSY), 141 to 143 (WSS), Arg-263, 346 to 347 (AT), and 368 to 369 (HA) contribute to the FMN site.

The protein belongs to the HpaH/HsaA monooxygenase family. In terms of assembly, homotetramer under anaerobic conditions. HsaAB monooxygenase consists of an oxygenase component HsaA and a reductase component HsaB.

It carries out the reaction 3-hydroxy-9,10-secoandrosta-1,3,5(10)-triene-9,17-dione + FMNH2 + O2 = 3,4-dihydroxy-9,10-secoandrosta-1,3,5(10)-triene-9,17-dione + FMN + H2O + H(+). It functions in the pathway lipid metabolism; steroid biosynthesis. In terms of biological role, catalyzes the o-hydroxylation of 3-hydroxy-9,10-secoandrosta-1,3,5(10)-triene-9,17-dione (3-HSA) to 3,4-dihydroxy-9,10-secoandrosta-1,3,5(10)-triene-9,17-dione (3,4-DHSA) in the catabolism of cholesterol. The polypeptide is Flavin-dependent monooxygenase, oxygenase subunit HsaA (Mycobacterium tuberculosis (strain CDC 1551 / Oshkosh)).